Consider the following 337-residue polypeptide: Protein-methionine-sulfoxide reductase catalytic subunit MsrP (337 aa).

A signal peptide (tat-type signal) is located at residues 1 to 54 (MLIKLPRSSECKASEITPEGIYLSRRTLLGGSLAGLALGALPGGVGAAQMSRYA). Mo-molybdopterin is bound by residues Asn-94, 97-98 (YE), Cys-152, Thr-187, Asn-237, Arg-242, and 253-255 (SIK).

Belongs to the MsrP family. Heterodimer of a catalytic subunit (MsrP) and a heme-binding subunit (MsrQ). Requires Mo-molybdopterin as cofactor. Post-translationally, predicted to be exported by the Tat system. The position of the signal peptide cleavage has not been experimentally proven.

The protein localises to the periplasm. The catalysed reaction is L-methionyl-[protein] + a quinone + H2O = L-methionyl-(S)-S-oxide-[protein] + a quinol. It carries out the reaction L-methionyl-[protein] + a quinone + H2O = L-methionyl-(R)-S-oxide-[protein] + a quinol. Its function is as follows. Part of the MsrPQ system that repairs oxidized periplasmic proteins containing methionine sulfoxide residues (Met-O), using respiratory chain electrons. Thus protects these proteins from oxidative-stress damage caused by reactive species of oxygen and chlorine generated by the host defense mechanisms. MsrPQ is essential for the maintenance of envelope integrity under bleach stress, rescuing a wide series of structurally unrelated periplasmic proteins from methionine oxidation. The catalytic subunit MsrP is non-stereospecific, being able to reduce both (R-) and (S-) diastereoisomers of methionine sulfoxide. The chain is Protein-methionine-sulfoxide reductase catalytic subunit MsrP from Pseudomonas putida (strain ATCC 47054 / DSM 6125 / CFBP 8728 / NCIMB 11950 / KT2440).